We begin with the raw amino-acid sequence, 554 residues long: MDIKRTVLWVIFFMSAVMLYDNWQRSHGRPSMFFPSATQTAPAAAGGASGTGATTTTAGEVPAAAAGTAPSTTAPAAQAQLVKFSTDVYDGEIDTRGGTLAKLTLKKQGDGKQPDLYITLFDHTAGHTYLARTGLLGGDFPNHNDVYTQVNAGPTSLTGDQNALKLSFESPVKGGVKVVKTYTFTRGSYVIGVDTKIDNVGTAPVTPTVYMELVRDNTAVETPMFSHTFLGPAVYTDAKHFQKIDFSDLDKNKANFEKAADNGWVAMVQHYFASAWIPQQGAKRDIYAEKIDPALYRVGVKQPVAAIAPGQSADVQARLFAGPEEERMLEGIAPGLELVKDYGWVTIIAKPLFWLLEKIHGFVGNWGWAIVLLTVLIKAVFFPLSAASYKSMARMKEITPRMQALRERFKSDPQKMNAALMELYKTEKVNPFGGCLPVVIQIPVFISLYWVLLASVEMRGAPWILWIHDLSQRDPFFILPVLMAVSMFVQTSLNPTPPDPVQAKMMKFMPIAFSVMFFFFPAGLVLYYVVNNVLSIAQQYYITRKLGGVKKKPA.

Helical transmembrane passes span 7-24 (VLWV…DNWQ), 362-382 (FVGN…AVFF), 436-456 (LPVV…LASV), 475-495 (PFFI…SLNP), and 510-530 (PIAF…YYVV).

It belongs to the OXA1/ALB3/YidC family. Type 1 subfamily. In terms of assembly, interacts with the Sec translocase complex via SecD. Specifically interacts with transmembrane segments of nascent integral membrane proteins during membrane integration.

The protein localises to the cell inner membrane. Functionally, required for the insertion and/or proper folding and/or complex formation of integral membrane proteins into the membrane. Involved in integration of membrane proteins that insert both dependently and independently of the Sec translocase complex, as well as at least some lipoproteins. Aids folding of multispanning membrane proteins. In Burkholderia ambifaria (strain MC40-6), this protein is Membrane protein insertase YidC.